We begin with the raw amino-acid sequence, 348 residues long: uncharacterized protein (348 aa).

Lys41 and Tyr170 together coordinate NADP(+). Position 339 is a phosphoserine (Ser339).

This sequence belongs to the NAD(P)-dependent epimerase/dehydratase family. Dihydroflavonol-4-reductase subfamily.

This is an uncharacterized protein from Saccharomyces cerevisiae (strain ATCC 204508 / S288c) (Baker's yeast).